Here is a 158-residue protein sequence, read N- to C-terminus: Endoribonuclease YbeY (158 aa).

3 residues coordinate Zn(2+): His-120, His-124, and His-130.

The protein belongs to the endoribonuclease YbeY family. It depends on Zn(2+) as a cofactor.

The protein localises to the cytoplasm. Single strand-specific metallo-endoribonuclease involved in late-stage 70S ribosome quality control and in maturation of the 3' terminus of the 16S rRNA. The chain is Endoribonuclease YbeY from Spiroplasma citri.